We begin with the raw amino-acid sequence, 365 residues long: MSKIDFRLEKTFGYTTGACAAAGAYSALYFLKNNEKLNFVEILNLKGDSLIIPIKNIEKRGNTAVSTVEKFAGEDIDITNGMDIKIEVILENWDDGYPKPSNVIIIGGTGVGLITKSGLQIKPGDHAINPKPREMIETNLKSLLKDDEYVTVKISVPTGDEIAKKTLNPKLGIVGGISILGTTGIVRPMSNEAYKESLAPQIDVALANNFENLIFVPGNIGTKHAKILLNAEEDQIIEVSNFWDYMLDKAKEKGVKDIMVFGHAGKIVKLAGGIFDTHSRVADARNEILCAYASLVSQDVEMLQKILQSNTTEDIVEILTEKGILSEVFNKVSKRVVERLSLRWEGINFSCIVIDMKGNILGKSD.

It belongs to the CbiD family.

It catalyses the reaction Co-precorrin-5B + S-adenosyl-L-methionine = Co-precorrin-6A + S-adenosyl-L-homocysteine. The protein operates within cofactor biosynthesis; adenosylcobalamin biosynthesis; cob(II)yrinate a,c-diamide from sirohydrochlorin (anaerobic route): step 6/10. Catalyzes the methylation of C-1 in cobalt-precorrin-5B to form cobalt-precorrin-6A. This Methanococcus maripaludis (strain C6 / ATCC BAA-1332) protein is Cobalt-precorrin-5B C(1)-methyltransferase.